The following is a 283-amino-acid chain: uncharacterized protein (283 aa).

This is an uncharacterized protein from Methanocaldococcus jannaschii (strain ATCC 43067 / DSM 2661 / JAL-1 / JCM 10045 / NBRC 100440) (Methanococcus jannaschii).